The chain runs to 508 residues: UDP-N-acetylmuramoyl-L-alanyl-D-glutamate--2,6-diaminopimelate ligase (508 aa).

Residue Ser29 coordinates UDP-N-acetyl-alpha-D-muramoyl-L-alanyl-D-glutamate. 112–118 (GTNGKTS) provides a ligand contact to ATP. UDP-N-acetyl-alpha-D-muramoyl-L-alanyl-D-glutamate contacts are provided by residues 159–160 (TT), Ser186, Gln192, and Arg194. Lys226 is subject to N6-carboxylysine. Residues Arg398, 421-424 (DNPR), Gly473, and Glu477 each bind meso-2,6-diaminopimelate. The Meso-diaminopimelate recognition motif motif lies at 421–424 (DNPR).

The protein belongs to the MurCDEF family. MurE subfamily. The cofactor is Mg(2+). Carboxylation is probably crucial for Mg(2+) binding and, consequently, for the gamma-phosphate positioning of ATP.

The protein localises to the cytoplasm. The enzyme catalyses UDP-N-acetyl-alpha-D-muramoyl-L-alanyl-D-glutamate + meso-2,6-diaminopimelate + ATP = UDP-N-acetyl-alpha-D-muramoyl-L-alanyl-gamma-D-glutamyl-meso-2,6-diaminopimelate + ADP + phosphate + H(+). It functions in the pathway cell wall biogenesis; peptidoglycan biosynthesis. Catalyzes the addition of meso-diaminopimelic acid to the nucleotide precursor UDP-N-acetylmuramoyl-L-alanyl-D-glutamate (UMAG) in the biosynthesis of bacterial cell-wall peptidoglycan. This Janthinobacterium sp. (strain Marseille) (Minibacterium massiliensis) protein is UDP-N-acetylmuramoyl-L-alanyl-D-glutamate--2,6-diaminopimelate ligase.